The following is a 321-amino-acid chain: Ribosomal protein L11 methyltransferase (321 aa).

The S-adenosyl-L-methionine site is built by Thr-150, Gly-171, Asp-193, and Asn-256.

This sequence belongs to the methyltransferase superfamily. PrmA family.

The protein resides in the cytoplasm. The enzyme catalyses L-lysyl-[protein] + 3 S-adenosyl-L-methionine = N(6),N(6),N(6)-trimethyl-L-lysyl-[protein] + 3 S-adenosyl-L-homocysteine + 3 H(+). Its function is as follows. Methylates ribosomal protein L11. The polypeptide is Ribosomal protein L11 methyltransferase (Herpetosiphon aurantiacus (strain ATCC 23779 / DSM 785 / 114-95)).